The primary structure comprises 204 residues: Large ribosomal subunit protein eL15 (204 aa).

It belongs to the eukaryotic ribosomal protein eL15 family. As to quaternary structure, component of the large ribosomal subunit.

It is found in the cytoplasm. In terms of biological role, component of the large ribosomal subunit. The ribosome is a large ribonucleoprotein complex responsible for the synthesis of proteins in the cell. The polypeptide is Large ribosomal subunit protein eL15 (rpl15) (Anguilla japonica (Japanese eel)).